The following is a 344-amino-acid chain: Heat-inducible transcription repressor HrcA (344 aa).

This sequence belongs to the HrcA family.

Functionally, negative regulator of class I heat shock genes (grpE-dnaK-dnaJ and groELS operons). Prevents heat-shock induction of these operons. In Geobacillus stearothermophilus (Bacillus stearothermophilus), this protein is Heat-inducible transcription repressor HrcA.